A 30-amino-acid chain; its full sequence is Ornithine carbamoyltransferase (30 aa).

The protein belongs to the aspartate/ornithine carbamoyltransferase superfamily. OTCase family.

It is found in the cytoplasm. It carries out the reaction carbamoyl phosphate + L-ornithine = L-citrulline + phosphate + H(+). It functions in the pathway amino-acid biosynthesis; L-arginine biosynthesis; L-arginine from L-ornithine and carbamoyl phosphate: step 1/3. In terms of biological role, has vitronectin and fibronectin-binding activity. This is Ornithine carbamoyltransferase (argF) from Staphylococcus epidermidis.